A 482-amino-acid chain; its full sequence is BTB/POZ domain-containing protein 6-B (482 aa).

The BTB domain occupies A80–A150.

Interacts with cul3. Interacts (via BTB domain) with zbtb16/plzf. As to expression, in embryos, expressed in the cranial ganglia.

The protein resides in the cytoplasm. The protein localises to the nucleus. Its function is as follows. Adapter protein for the cul3 E3 ubiquitin-protein ligase complex. Promotes the export of zbtb16/plzf from the nucleus to the cytoplasm and targets zbtb16/plzf for ubiquitination and degradation. Up-regulates neurog1 expression and antagonizes zbtb16/plzf, to promote neurogenesis. The polypeptide is BTB/POZ domain-containing protein 6-B (btbd6b) (Danio rerio (Zebrafish)).